Consider the following 387-residue polypeptide: Chaperone protein DnaJ (387 aa).

Positions 6–70 constitute a J domain; sequence DYYEILGLSR…EKRAQYDRFG (65 aa). The CR-type zinc-finger motif lies at 130-212; that stretch reads GVRKDIDVPR…CSGTGRVRNT (83 aa). C143, C146, C160, C163, C186, C189, C200, and C203 together coordinate Zn(2+). CXXCXGXG motif repeat units follow at residues 143–150, 160–167, 186–193, and 200–207; these read CSNCSGTG, CPTCGGTG, CSTCRGKG, and CPVCSGTG. A disordered region spans residues 143–162; it reads CSNCSGTGARPGTSPKRCPT.

This sequence belongs to the DnaJ family. Homodimer. The cofactor is Zn(2+).

The protein localises to the cytoplasm. Functionally, participates actively in the response to hyperosmotic and heat shock by preventing the aggregation of stress-denatured proteins and by disaggregating proteins, also in an autonomous, DnaK-independent fashion. Unfolded proteins bind initially to DnaJ; upon interaction with the DnaJ-bound protein, DnaK hydrolyzes its bound ATP, resulting in the formation of a stable complex. GrpE releases ADP from DnaK; ATP binding to DnaK triggers the release of the substrate protein, thus completing the reaction cycle. Several rounds of ATP-dependent interactions between DnaJ, DnaK and GrpE are required for fully efficient folding. Also involved, together with DnaK and GrpE, in the DNA replication of plasmids through activation of initiation proteins. This is Chaperone protein DnaJ from Methanosarcina thermophila.